Here is a 65-residue protein sequence, read N- to C-terminus: Large ribosomal subunit protein uL29 (65 aa).

The protein belongs to the universal ribosomal protein uL29 family.

The polypeptide is Large ribosomal subunit protein uL29 (rpmC) (Buchnera aphidicola subsp. Acyrthosiphon pisum (strain APS) (Acyrthosiphon pisum symbiotic bacterium)).